Consider the following 187-residue polypeptide: GTP cyclohydrolase 1 (187 aa).

Zn(2+) is bound by residues Cys81, His84, and Cys152.

This sequence belongs to the GTP cyclohydrolase I family. Toroid-shaped homodecamer, composed of two pentamers of five dimers.

It carries out the reaction GTP + H2O = 7,8-dihydroneopterin 3'-triphosphate + formate + H(+). Its pathway is cofactor biosynthesis; 7,8-dihydroneopterin triphosphate biosynthesis; 7,8-dihydroneopterin triphosphate from GTP: step 1/1. The polypeptide is GTP cyclohydrolase 1 (Pyrobaculum aerophilum (strain ATCC 51768 / DSM 7523 / JCM 9630 / CIP 104966 / NBRC 100827 / IM2)).